We begin with the raw amino-acid sequence, 179 residues long: Large ribosomal subunit protein uL6 (179 aa).

It belongs to the universal ribosomal protein uL6 family. As to quaternary structure, part of the 50S ribosomal subunit.

In terms of biological role, this protein binds to the 23S rRNA, and is important in its secondary structure. It is located near the subunit interface in the base of the L7/L12 stalk, and near the tRNA binding site of the peptidyltransferase center. This Bifidobacterium longum subsp. infantis (strain ATCC 15697 / DSM 20088 / JCM 1222 / NCTC 11817 / S12) protein is Large ribosomal subunit protein uL6.